The primary structure comprises 315 residues: Ribosomal RNA small subunit methyltransferase H (315 aa).

S-adenosyl-L-methionine is bound by residues 37 to 39 (GGH), Asp-57, Phe-83, Asp-105, and Gln-112.

Belongs to the methyltransferase superfamily. RsmH family.

The protein localises to the cytoplasm. It catalyses the reaction cytidine(1402) in 16S rRNA + S-adenosyl-L-methionine = N(4)-methylcytidine(1402) in 16S rRNA + S-adenosyl-L-homocysteine + H(+). Functionally, specifically methylates the N4 position of cytidine in position 1402 (C1402) of 16S rRNA. This Pseudomonas putida (strain GB-1) protein is Ribosomal RNA small subunit methyltransferase H.